Reading from the N-terminus, the 382-residue chain is MIOREX complex component 5 (382 aa).

Residues 1 to 12 (MRRTFSQLATRL) constitute a mitochondrion transit peptide.

Associates with the mitochondrial ribosome.

It is found in the mitochondrion. Functionally, component of MIOREX complexes, large expressome-like assemblies of ribosomes with factors involved in all the steps of post-transcriptional gene expression. The protein is MIOREX complex component 5 of Saccharomyces cerevisiae (strain ATCC 204508 / S288c) (Baker's yeast).